A 352-amino-acid chain; its full sequence is uncharacterized protein (352 aa).

An N-terminal signal peptide occupies residues 1–22 (MIFKKTILIFIISFFFISISFA). Residues 25–47 (SSSSSSSSSSSSSSWSSSESSSS) are compositionally biased toward low complexity. The tract at residues 25–49 (SSSSSSSSSSSSSSWSSSESSSSPA) is disordered. N76, N110, N182, N212, and N223 each carry an N-linked (GlcNAc...) asparagine glycan.

It localises to the secreted. This is an uncharacterized protein from Dictyostelium discoideum (Social amoeba).